We begin with the raw amino-acid sequence, 354 residues long: MLLLHWDNMGKIELHHVFVMLSCIYLIFSDISINSAVVFLFSSIFFYISFTAGKRLYYLIGIDKENLKINLKKHYNFGIFLMIVGLIAVTSDLIWVKDVPLFNPLSRKFLNVYFTTLSHLFLVGWAIVVASSNIDKKKILLYTIIFSILIMLLGYRTNVLVLLISVGAILYYKNKISNREILKYGILVFVILLGLSILRLYALGVEGNPITSRISLTMSIYDIIFNNFNGVFNGYIHYSAVFSYLGLCNGARTVIAKTLGIYNVSITPTIVGAVIGDYGTLAIIPYFGILGIFLGFFYKLAKDVKGIYLGIYGILFAYTLIGIESGILDIDVILYYFFGLILCIYAILLRKLKR.

The next 9 helical transmembrane spans lie at Met-9–Ser-29, Ile-31–Thr-51, Asn-76–Val-96, Phe-109–Val-129, Ile-144–Ile-164, Gly-185–Val-205, Tyr-278–Tyr-298, Gly-306–Gly-326, and Ile-327–Ile-347.

The protein resides in the cell membrane. This is an uncharacterized protein from Methanocaldococcus jannaschii (strain ATCC 43067 / DSM 2661 / JAL-1 / JCM 10045 / NBRC 100440) (Methanococcus jannaschii).